Here is a 79-residue protein sequence, read N- to C-terminus: Defensin-like protein 117 (79 aa).

Residues 1 to 24 (MTTTKTMLVAFVLTLFFVISSVHC) form the signal peptide. Cystine bridges form between C40/C75, C46/C68, C53/C73, and C57/C74.

Belongs to the DEFL family.

It is found in the secreted. This Arabidopsis thaliana (Mouse-ear cress) protein is Defensin-like protein 117.